A 305-amino-acid chain; its full sequence is Tyrosine recombinase XerD (305 aa).

One can recognise a Core-binding (CB) domain in the interval 1–83; it reads MEFISQFLEM…TIKSYYEFLI (83 aa). Residues 104–298 form the Tyr recombinase domain; that stretch reads KLPEILSIDD…QTNHLKKALL (195 aa). Active-site residues include arginine 145, lysine 175, histidine 250, arginine 253, and histidine 276. The O-(3'-phospho-DNA)-tyrosine intermediate role is filled by tyrosine 285.

It belongs to the 'phage' integrase family. XerD subfamily. As to quaternary structure, forms a cyclic heterotetrameric complex composed of two molecules of XerC and two molecules of XerD.

The protein localises to the cytoplasm. In terms of biological role, site-specific tyrosine recombinase, which acts by catalyzing the cutting and rejoining of the recombining DNA molecules. The XerC-XerD complex is essential to convert dimers of the bacterial chromosome into monomers to permit their segregation at cell division. It also contributes to the segregational stability of plasmids. This is Tyrosine recombinase XerD from Rickettsia bellii (strain RML369-C).